A 540-amino-acid polypeptide reads, in one-letter code: GMP synthase [glutamine-hydrolyzing] (540 aa).

Residues 26–216 (LIIILDFGSQ…VYHICDCEPT (191 aa)) enclose the Glutamine amidotransferase type-1 domain. Residue cysteine 103 is the Nucleophile of the active site. Residues histidine 190 and glutamate 192 contribute to the active site. A GMPS ATP-PPase domain is found at 217 to 415 (WTTAAFVEEA…IGLPEEIVQR (199 aa)). Residue 244–250 (SGGVDSS) participates in ATP binding.

In terms of assembly, homodimer.

The catalysed reaction is XMP + L-glutamine + ATP + H2O = GMP + L-glutamate + AMP + diphosphate + 2 H(+). The protein operates within purine metabolism; GMP biosynthesis; GMP from XMP (L-Gln route): step 1/1. In terms of biological role, catalyzes the synthesis of GMP from XMP. The chain is GMP synthase [glutamine-hydrolyzing] from Nostoc punctiforme (strain ATCC 29133 / PCC 73102).